A 328-amino-acid chain; its full sequence is Phosphate acyltransferase (328 aa).

This sequence belongs to the PlsX family. Homodimer. Probably interacts with PlsY.

It localises to the cytoplasm. It catalyses the reaction a fatty acyl-[ACP] + phosphate = an acyl phosphate + holo-[ACP]. It participates in lipid metabolism; phospholipid metabolism. Catalyzes the reversible formation of acyl-phosphate (acyl-PO(4)) from acyl-[acyl-carrier-protein] (acyl-ACP). This enzyme utilizes acyl-ACP as fatty acyl donor, but not acyl-CoA. The polypeptide is Phosphate acyltransferase (Mycoplasma pneumoniae (strain ATCC 29342 / M129 / Subtype 1) (Mycoplasmoides pneumoniae)).